Here is a 1693-residue protein sequence, read N- to C-terminus: Serine protease filzig (1693 aa).

Topologically, residues methionine 1 to glutamine 47 are cytoplasmic. A helical; Signal-anchor for type II membrane protein transmembrane segment spans residues leucine 48–serine 68. Residues glycine 69 to lysine 1693 lie on the Extracellular side of the membrane. Disordered regions lie at residues glutamine 170–serine 198, glutamine 212–phenylalanine 321, glycine 352–glycine 465, and serine 477–serine 524. 2 stretches are compositionally biased toward polar residues: residues phenylalanine 178–serine 198 and glutamine 212–proline 222. 2 stretches are compositionally biased toward low complexity: residues glutamate 230–glutamate 241 and threonine 252–serine 268. Residues glutamate 274–proline 294 are compositionally biased toward polar residues. Low complexity-rich tracts occupy residues serine 358 to lysine 404, glutamine 422 to proline 431, and glutamate 488 to glutamine 501. The segment covering serine 502–serine 524 has biased composition (polar residues). 2 N-linked (GlcNAc...) asparagine glycosylation sites follow: asparagine 541 and asparagine 582. Disordered stretches follow at residues glutamine 615–glycine 635, histidine 752–threonine 1007, and tyrosine 1057–isoleucine 1090. A compositionally biased stretch (polar residues) spans serine 771–tyrosine 799. A compositionally biased stretch (basic residues) spans proline 836–valine 847. 2 stretches are compositionally biased toward polar residues: residues glutamine 951–tyrosine 962 and lysine 989–serine 1000. Asparagine 1215 and asparagine 1272 each carry an N-linked (GlcNAc...) asparagine glycan. Composition is skewed to low complexity over residues proline 1297–lysine 1307, threonine 1331–arginine 1353, and arginine 1362–arginine 1376. A disordered region spans residues proline 1297–serine 1435. The span at aspartate 1380–valine 1391 shows a compositional bias: acidic residues. The region spanning isoleucine 1449–glycine 1691 is the Peptidase S1 domain. A disulfide bridge connects residues cysteine 1480 and cysteine 1496. Residues histidine 1495 and aspartate 1544 each act as charge relay system in the active site. Disulfide bonds link cysteine 1608–cysteine 1627 and cysteine 1638–cysteine 1667. Serine 1642 (charge relay system) is an active-site residue.

The protein belongs to the peptidase S1 family.

The protein resides in the cell membrane. In terms of biological role, probable endopeptidase. In tracheal terminal cells, acts downstream of ich to regulate seamless tube growth and/or maintenance probably by processing lumenal matrix proteins. In Drosophila melanogaster (Fruit fly), this protein is Serine protease filzig.